The chain runs to 233 residues: MADS-box transcription factor 56 (233 aa).

Residues 1 to 61 enclose the MADS-box domain; the sequence is MVRGRTELKR…GRLYEFASAP (61 aa). The 91-residue stretch at 87-177 folds into the K-box domain; sequence IQQVKDDTLG…RGKHRNLEAA (91 aa).

It localises to the nucleus. Probable transcription factor. The polypeptide is MADS-box transcription factor 56 (MADS56) (Oryza sativa subsp. japonica (Rice)).